A 431-amino-acid chain; its full sequence is Cyclic 2,3-diphosphoglycerate synthetase (431 aa).

This sequence belongs to the cyclic 2,3-diphosphoglycerate synthetase family.

The protein resides in the cytoplasm. The catalysed reaction is (2R)-2,3-bisphosphoglycerate + ATP + H(+) = cyclic (2R)-2,3-bisphosphoglycerate + ADP + phosphate. Its function is as follows. Catalyzes the formation of cyclic 2,3-diphosphoglycerate (cDPG) by formation of an intramolecular phosphoanhydride bond at the expense of ATP. This is Cyclic 2,3-diphosphoglycerate synthetase from Pyrococcus furiosus (strain ATCC 43587 / DSM 3638 / JCM 8422 / Vc1).